A 514-amino-acid polypeptide reads, in one-letter code: Protein nucleotidyltransferase YdiU (514 aa).

8 residues coordinate ATP: G90, G92, R93, K113, D125, G126, R176, and R183. D267 (proton acceptor) is an active-site residue. The Mg(2+) site is built by N268 and D277. D277 serves as a coordination point for ATP.

This sequence belongs to the SELO family. It depends on Mg(2+) as a cofactor. The cofactor is Mn(2+).

The enzyme catalyses L-seryl-[protein] + ATP = 3-O-(5'-adenylyl)-L-seryl-[protein] + diphosphate. It carries out the reaction L-threonyl-[protein] + ATP = 3-O-(5'-adenylyl)-L-threonyl-[protein] + diphosphate. It catalyses the reaction L-tyrosyl-[protein] + ATP = O-(5'-adenylyl)-L-tyrosyl-[protein] + diphosphate. The catalysed reaction is L-histidyl-[protein] + UTP = N(tele)-(5'-uridylyl)-L-histidyl-[protein] + diphosphate. The enzyme catalyses L-seryl-[protein] + UTP = O-(5'-uridylyl)-L-seryl-[protein] + diphosphate. It carries out the reaction L-tyrosyl-[protein] + UTP = O-(5'-uridylyl)-L-tyrosyl-[protein] + diphosphate. Nucleotidyltransferase involved in the post-translational modification of proteins. It can catalyze the addition of adenosine monophosphate (AMP) or uridine monophosphate (UMP) to a protein, resulting in modifications known as AMPylation and UMPylation. The protein is Protein nucleotidyltransferase YdiU of Photobacterium profundum (strain SS9).